A 253-amino-acid polypeptide reads, in one-letter code: DnaJ homolog subfamily C member 8 (253 aa).

Ala2 is modified (N-acetylalanine). At Ser35 the chain carries Phosphoserine. In terms of domain architecture, J spans 57–124 (NPFEVLQIDP…QKKRALDVIQ (68 aa)). Position 146 is an N6-acetyllysine (Lys146). Residues 181 to 222 (EAKEMHERKRQREEEIEAQEKAKREREWQKNFEESRDGRVDS) are compositionally biased toward basic and acidic residues. Positions 181-253 (EAKEMHERKR…PPKVKMEQRE (73 aa)) are disordered. 2 short sequence motifs (nuclear localization signal) span residues 189–192 (KRQR) and 203–206 (KRER). Residue Ser222 is modified to Phosphoserine. Basic residues predominate over residues 231-240 (KGKKEKKNRT). Residues 232–253 (GKKEKKNRTFLRPPKVKMEQRE) are essential for polyglutamine aggregation suppression.

In terms of assembly, interacts with SRPK1. Interacts with HSP70 (HSPA1A or HSPA1B). In terms of tissue distribution, ubiquitous.

The protein localises to the nucleus. Its function is as follows. Suppresses polyglutamine (polyQ) aggregation of ATXN3 in neuronal cells. This chain is DnaJ homolog subfamily C member 8 (DNAJC8), found in Homo sapiens (Human).